The following is a 105-amino-acid chain: Large ribosomal subunit protein uL24 (105 aa).

Belongs to the universal ribosomal protein uL24 family. Part of the 50S ribosomal subunit.

Its function is as follows. One of two assembly initiator proteins, it binds directly to the 5'-end of the 23S rRNA, where it nucleates assembly of the 50S subunit. Functionally, one of the proteins that surrounds the polypeptide exit tunnel on the outside of the subunit. The sequence is that of Large ribosomal subunit protein uL24 from Sphingopyxis alaskensis (strain DSM 13593 / LMG 18877 / RB2256) (Sphingomonas alaskensis).